Consider the following 455-residue polypeptide: MESCYVVWSSYFLQLKLTAPILLKPREIRCLRTGLSILSQQSTFVCMCRDEGSFTAAYFTYIDLRDCGNVTLAVQNISDVDLDLKQFPLIINLFAFFLPSINLVSLPVQIVERMEHNYIPHGECRAQFILYGSQTKLRAHIKRIRWTELQHEEPTHYMYACEFWIDLQTTPPDQIFNSAKVEFISSRNVYFKQIMLHEKILVIRASYENNYLLNPDNFPSDIFFQVNFIQTIPHIVMERNQEPVMTYDGTCITVGSTKNINSNTTDPFSCTFPTFFDSKQKFAGLFIPRLINGISLNTFTWKERTHLQVTMRAYKKNCRIDYSQELGKLIFLPSQIVTHDQSNIDFGWTETSRILISNQNNQISVFRSETTPVADSPVLSTVPNITAATNVSINLNSLHLNIAKEHLVPVRYRMRTDNLRTFLPITALPHTLTVLEGNIGLQTVPCPSGNRDINA.

The protein belongs to the herpesviridae UL82 family.

This Homo sapiens (Human) protein is Protein U54 (U54).